The primary structure comprises 301 residues: Lufaxin (301 aa).

The N-terminal stretch at 1-23 (MNSINFLSIVGLISFGFIVAVKC) is a signal peptide. Cystine bridges form between cysteine 52–cysteine 60, cysteine 78–cysteine 137, cysteine 102–cysteine 112, and cysteine 258–cysteine 265. The N-linked (GlcNAc...) asparagine glycan is linked to asparagine 262.

In terms of assembly, interacts with factor Xa. Associates with complement proconvertase C3b-B complex. Expressed in salivary glands.

Its subcellular location is the secreted. Its function is as follows. Sand fly salivary protein with antithrombotic, and anti-complement (alternative pathway) activities. Is a slow, tight, non-competitive, and reversible inhibitor of factor Xa (FXa, F10). Is specific for FXa (Kd=3.86 nM) and does not interact with non-activated FX, or all other enzymes tested. In addition, it blocks prothrombinase and increases both prothrombin time and activated partial thromboplastin time. It also prevents protease-activated receptor 2 (F2RL1, PAR2) activation by FXa. In vivo, it abrogates edema formation triggered by injection of FXa in the paw of mice. Moreover, it prevents FeCl(3)-induced carotid artery thrombus formation and prolongs activated partial thromboplastin time ex vivo, implying that it works as an anticoagulant in vivo. It also inhibits the early steps of the alternative pathway of complement by direct binding to the proconvertase C3b-B complex, by inhibiting activation of factor B and consequently the formation of the C3 convertase. This chain is Lufaxin, found in Lutzomyia longipalpis (Sand fly).